Consider the following 590-residue polypeptide: Nuclear receptor subfamily 2 group C member 1 (590 aa).

Residues 1–166 are required for interaction with KAT2B; the sequence is MATIEEIAHQ…RLQRCIAFGM (166 aa). Positions 98–173 form a DNA-binding region, nuclear receptor; it reads FDLCVVCGDK…FGMKQDSVQC (76 aa). NR C4-type zinc fingers lie at residues 101-121 and 137-156; these read CVVC…CEGC and CRGS…CQYC. Ser185 and Ser203 each carry phosphoserine. Phosphothreonine is present on Thr208. Position 210 is a phosphothreonine; by MAPK1 (Thr210). Residue Lys238 forms a Glycyl lysine isopeptide (Lys-Gly) (interchain with G-Cter in SUMO); alternate linkage. A Glycyl lysine isopeptide (Lys-Gly) (interchain with G-Cter in SUMO2); alternate cross-link involves residue Lys238. The NR LBD domain occupies 333 to 577; sequence ESMEGSTHLI…SVIPHILKME (245 aa). Residue Ser568 is modified to Phosphoserine; by PKC. The tract at residues 571 to 590 is required for interaction with NRIP1; sequence PHILKMEPADYNSQIIGHSL. A Glycyl lysine isopeptide (Lys-Gly) (interchain with G-Cter in SUMO2) cross-link involves residue Lys575.

Belongs to the nuclear hormone receptor family. NR2 subfamily. Homodimer. Heterodimer; with NR2C2 which is required for chromatin remodeling and for binding to promoter regions such as globin DR1 repeats. Interacts with ESR1; the interaction prevents homodimerization of ESR1 and suppresses its transcriptional activity and cell growth. Interacts with NRIP1 (via its LXXLL motifs); the interaction provides corepressor activity. Interacts with HDAC3 (via the DNA-binding domain); the interaction recruits phosphorylated NR2C1 to PML bodies for sumoylation. Interacts with HDAC4 (via the DNA-binding domain). Interacts with PIAS1; the interaction is required for sumoylation of NR2C1. Interacts with UBE2I; the interaction is required for sumoylation of NR2C1. Interacts with KAT2B; the interaction acts as a corepressor of gene expression. Post-translationally, sumoylation requires both PIAS1 and UBE2I. Sumoylation appears to dissociate NR2C1 from the PML nuclear bodies. Enhances the interaction with NRIP1 but inhibits interaction with KAT2B. In proliferating cells, stimulation by all-trans retinoic acid, activation of MAPK1-mediated phosphorylation and recruitment to PML bodies with subsequent sumoylation, suppresses OCT4 expression. In terms of processing, phosphorylated on several serine and threonine residues. Phosphorylation on Thr-210, stimulated by all-trans retinoic acid (atRA) mediates PML location and sumoylation in proliferating cells which then modulates its association with effector molecules, KAT2B and NRIP1. Phosphorylation on Ser-568 by PKC is important for protein stability and function as activator of RARB.

The protein resides in the nucleus. The protein localises to the PML body. Orphan nuclear receptor. Binds the IR7 element in the promoter of its own gene in an autoregulatory negative feedback mechanism. Primarily repressor of a broad range of genes including ESR1 and RARB. Together with NR2C2, forms the core of the DRED (direct repeat erythroid-definitive) complex that represses embryonic and fetal globin transcription. Binds to hormone response elements (HREs) consisting of two 5'-AGGTCA-3' half site direct repeat consensus sequences. Also activator of OCT4 gene expression. Plays a fundamental role in early embryogenesis and regulates embryonic stem cell proliferation and differentiation. Mediator of retinoic acid-regulated preadipocyte proliferation. The sequence is that of Nuclear receptor subfamily 2 group C member 1 (Nr2c1) from Rattus norvegicus (Rat).